Consider the following 159-residue polypeptide: Large ribosomal subunit protein uL11 (159 aa).

This sequence belongs to the universal ribosomal protein uL11 family. In terms of assembly, part of the ribosomal stalk of the 50S ribosomal subunit. Interacts with L10 and the large rRNA to form the base of the stalk. L10 forms an elongated spine to which L12 dimers bind in a sequential fashion forming a multimeric L10(L12)X complex.

In terms of biological role, forms part of the ribosomal stalk which helps the ribosome interact with GTP-bound translation factors. The chain is Large ribosomal subunit protein uL11 from Methanococcus maripaludis (strain DSM 14266 / JCM 13030 / NBRC 101832 / S2 / LL).